Here is a 544-residue protein sequence, read N- to C-terminus: NADP-dependent malic enzyme (544 aa).

The interval 1–22 (MQNKPSFILRNPSANKGTGFNN) is disordered. The span at 12–21 (PSANKGTGFN) shows a compositional bias: polar residues. Tyr-92 (proton donor) is an active-site residue. Arg-145 serves as a coordination point for NAD(+). Lys-163 acts as the Proton acceptor in catalysis. A divalent metal cation is bound by residues Glu-234, Asp-235, and Asp-258. Residue Asp-258 coordinates NAD(+). Residue 287-303 (VFLGAGSAGIGVADCIM) coordinates NADP(+). NAD(+) is bound at residue Asn-400.

The protein belongs to the malic enzymes family. Homotetramer. Mg(2+) is required as a cofactor. The cofactor is Mn(2+). In terms of tissue distribution, expressed in the fruiting body.

The protein resides in the cytoplasm. The catalysed reaction is (S)-malate + NADP(+) = pyruvate + CO2 + NADPH. The enzyme catalyses oxaloacetate + H(+) = pyruvate + CO2. The polypeptide is NADP-dependent malic enzyme (malA) (Dictyostelium discoideum (Social amoeba)).